Reading from the N-terminus, the 205-residue chain is Protease (205 aa).

Active-site residues include His-55, Asp-72, and Cys-122.

It belongs to the peptidase C5 family. Interacts with protease cofactor pVI-C; this interaction is necessary for protease activation.

It localises to the virion. Its subcellular location is the host nucleus. The catalysed reaction is Cleaves proteins of the adenovirus and its host cell at two consensus sites: -Yaa-Xaa-Gly-Gly-|-Xaa- and -Yaa-Xaa-Gly-Xaa-|-Gly- (in which Yaa is Met, Ile or Leu, and Xaa is any amino acid).. With respect to regulation, requires DNA and protease cofactor for maximal activation. Inside nascent virions, becomes partially activated by binding to the viral DNA, allowing it to cleave the cofactor that binds to the protease and fully activates it. Actin, like the viral protease cofactor, seems to act as a cofactor in the cleavage of cytokeratin 18 and of actin itself. Cleaves viral precursor proteins (pTP, pIIIa, pVI, pVII, pVIII, and pX) inside newly assembled particles giving rise to mature virions. Protease complexed to its cofactor slides along the viral DNA to specifically locate and cleave the viral precursors. Mature virions have a weakened organization compared to the unmature virions, thereby facilitating subsequent uncoating. Without maturation, the particle lacks infectivity and is unable to uncoat. Late in adenovirus infection, in the cytoplasm, may participate in the cytoskeleton destruction. Cleaves host cell cytoskeletal keratins K7 and K18. The chain is Protease from Galliformes (FAdV-8).